The chain runs to 1151 residues: Sterol regulatory element-binding protein 1 (1151 aa).

Positions 1 to 59 are transcriptional activation (acidic); sequence MDEPPFTEAALEQALAEPCELDAALLTDIEDMLQLINNQDSDFPGLFDAPYAGVAGGTD. Residues 1–487 lie on the Cytoplasmic side of the membrane; it reads MDEPPFTEAA…HGRGMLDRSR (487 aa). Residues 27–35 carry the 9aaTAD motif; it reads TDIEDMLQL. 2 disordered regions span residues 39-125 and 164-184; these read QDSD…IKEE and GYPS…TSQT. Positions 57–69 are enriched in low complexity; sequence GTDPTSPDASSPG. Positions 91–105 are enriched in pro residues; it reads TPPPPPVSPTQPAPT. Residues Ser98 and Ser117 each carry the phosphoserine modification. A compositionally biased stretch (polar residues) spans 170-184; that stretch reads GSFSSATPPGSTSQT. The interaction with LMNA stretch occupies residues 234-497; sequence QQVPVLLQPH…LALCVLVFLC (264 aa). The region spanning 324 to 374 is the bHLH domain; that stretch reads EKRTAHNAIEKRYRSSINDKIIELKDLVVGTEAKLNKSAVLRKAIDYIRFL. Phosphoserine; by SIK1 is present on residues Ser338 and Ser339. The tract at residues 374 to 396 is leucine-zipper; that stretch reads LQQSNQKLKQENLSLRTAAHKSK. At Ser397 the chain carries Phosphoserine; by AMPK. The disordered stretch occupies residues 399 to 479; the sequence is KDLVSCSSGG…KPEQLPAPHG (81 aa). Position 403 is a phosphoserine; by SIK1 (Ser403). The segment covering 431 to 448 has biased composition (low complexity); sequence DAGSPSQSSPLSLGSRGS. Ser457 carries the post-translational modification Phosphoserine. Residues 488–508 traverse the membrane as a helical segment; it reads LALCVLVFLCLSCNPLASLMG. The Lumenal segment spans residues 509–547; it reads SWALPGPSDATSAYHGPWRSVLGAEGRDGPGWVLWLLPP. A helical transmembrane segment spans residues 548 to 568; sequence LVWLTNGLLVLLFLALLFVYG. The Cytoplasmic portion of the chain corresponds to 569 to 1151; that stretch reads EPVTRPHSDP…LGGGTTVTSS (583 aa). The disordered stretch occupies residues 987–1006; sequence RQKPPPPSQASQGSSSGAQA. Low complexity predominate over residues 995 to 1006; sequence QASQGSSSGAQA. Residue Ser1060 is modified to Phosphoserine.

Belongs to the SREBP family. As to quaternary structure, efficient DNA binding of the soluble transcription factor fragment requires dimerization with another bHLH protein. Interacts with CEBPA, the interaction produces a transcriptional synergy. Interacts with LMNA. In terms of assembly, forms a tight complex with SCAP, the SCAP-SREBP complex, in the endoplasmic reticulum membrane and the Golgi apparatus. Interacts with PAQR3; the interaction anchors the SCAP-SREBP complex to the Golgi apparatus in low cholesterol conditions. Processed in the Golgi apparatus, releasing the protein from the membrane. At low cholesterol the SCAP-SREBP complex is recruited into COPII vesicles for export from the endoplasmic reticulum. In the Golgi, complex SREBPs are cleaved sequentially by site-1 (MBTPS1, S1P) and site-2 (MBTPS2, S2P) proteases. The first cleavage by site-1 protease occurs within the luminal loop, the second cleavage by site-2 protease occurs within the first transmembrane domain, releasing the transcription factor from the Golgi membrane. Post-translationally, phosphorylated by AMPK, leading to suppress protein processing and nuclear translocation, and repress target gene expression. Phosphorylation at Ser-403 by SIK1 represses activity possibly by inhibiting DNA-binding. In terms of processing, SCAP-free SREBF1 is ubiquitinated by the BCR(ARMC5) complex, leading to its degradation. Ubiquitinated; the nuclear form has a rapid turnover and is rapidly ubiquitinated and degraded by the proteasome in the nucleus.

The protein localises to the endoplasmic reticulum membrane. It is found in the golgi apparatus membrane. It localises to the cytoplasmic vesicle. Its subcellular location is the COPII-coated vesicle membrane. The protein resides in the nucleus. Its activity is regulated as follows. Activation by cleavage is down-regulated upon activation of SIRT3-dependent PRKAA1/AMPK-alpha signaling cascade which leads to inhibition of ATP-consuming lipogenesis to restore cellular energy balance. In terms of biological role, precursor of the transcription factor form (Processed sterol regulatory element-binding protein 1), which is embedded in the endoplasmic reticulum membrane. Low sterol concentrations promote processing of this form, releasing the transcription factor form that translocates into the nucleus and activates transcription of genes involved in cholesterol biosynthesis and lipid homeostasis. Its function is as follows. Key transcription factor that regulates expression of genes involved in cholesterol biosynthesis and lipid homeostasis. Binds to the sterol regulatory element 1 (SRE-1) (5'-ATCACCCCAC-3'). Has dual sequence specificity binding to both an E-box motif (5'-ATCACGTGA-3') and to SRE-1 (5'-ATCACCCCAC-3'). Regulates the promoters of genes involved in cholesterol biosynthesis and the LDL receptor (LDLR) pathway of sterol regulation. In Sus scrofa (Pig), this protein is Sterol regulatory element-binding protein 1 (SREBF1).